The following is a 408-amino-acid chain: Interferon-activable protein 203 (408 aa).

The 87-residue stretch at 1-87 (MAEYKNIVLL…AKKLKTEKAK (87 aa)) folds into the Pyrin domain. Positions 84–208 (EKAKVQEKKK…EGHHQGPKQV (125 aa)) are disordered. The span at 92–102 (KKGKCKTAGKK) shows a compositional bias: basic residues. Polar residues predominate over residues 150–159 (AQLPETSGTN). Residues 190–388 (TVPKEPSREE…SVRHSYMQVI (199 aa)) form the HIN-200 domain.

The protein belongs to the HIN-200 family. Constitutively expressed in the thymus, bone marrow and spleen. Isoform 1 and isoform 3 are present in liver (at protein level).

The protein resides in the nucleus. The chain is Interferon-activable protein 203 (Ifi203) from Mus musculus (Mouse).